The sequence spans 49 residues: Sperm protamine P1 (49 aa).

The protein belongs to the protamine P1 family. In terms of tissue distribution, testis.

It is found in the nucleus. The protein resides in the chromosome. In terms of biological role, protamines substitute for histones in the chromatin of sperm during the haploid phase of spermatogenesis. They compact sperm DNA into a highly condensed, stable and inactive complex. In Pteropus hypomelanus (Island flying fox), this protein is Sperm protamine P1 (PRM1).